Here is a 719-residue protein sequence, read N- to C-terminus: High-osmolarity-induced transcription protein 1 (719 aa).

A compositionally biased stretch (polar residues) spans 68-88 (HISPTTGSESASGSNASTLRN). Disordered stretches follow at residues 68–90 (HISP…RNDG), 102–159 (AAIS…NEIS), 353–402 (THQQ…ASAA), and 496–610 (TTSE…TKPN). Over residues 117 to 127 (IGEKLSNEERV) the composition is skewed to basic and acidic residues. Residues 128 to 143 (NSNVSASNSTTAGTGR) show a composition bias toward low complexity. Polar residues-rich tracts occupy residues 144–159 (MLSQ…NEIS), 353–369 (THQQ…NAST), 387–398 (TQSNNNASTNDH), and 496–522 (TTSE…STLP). A phosphoserine mark is found at Ser-146 and Ser-153. Residues 535 to 572 (DDDGYQEDDDDDGDDEGDGRDNEEDSTAEEDEVDDEIE) show a composition bias toward acidic residues. The span at 581 to 601 (NKRRRSLHHKKSNSLNGRRKL) shows a compositional bias: basic residues.

The protein belongs to the HOT1 family. As to quaternary structure, interacts with HOG1. In terms of processing, hyperphosphorylated during acute stress.

The protein localises to the nucleus. Its function is as follows. Required for a complete transcriptional response to osmotic stress, through recruitment of HOG1 followed by pol II recruitment to the promoters of GPD1 and other HOG-dependent genes. The polypeptide is High-osmolarity-induced transcription protein 1 (HOT1) (Saccharomyces cerevisiae (strain ATCC 204508 / S288c) (Baker's yeast)).